A 949-amino-acid polypeptide reads, in one-letter code: Bifunctional uridylyltransferase/uridylyl-removing enzyme (949 aa).

Residues Met-1–Pro-377 form a uridylyltransferase region. The uridylyl-removing stretch occupies residues Gly-378–Thr-733. The HD domain occupies Val-494–Leu-610. 2 consecutive ACT domains span residues Glu-734–Ala-815 and Val-845–Pro-926. The disordered stretch occupies residues Met-925–Thr-949.

It belongs to the GlnD family. It depends on Mg(2+) as a cofactor.

It catalyses the reaction [protein-PII]-L-tyrosine + UTP = [protein-PII]-uridylyl-L-tyrosine + diphosphate. The enzyme catalyses [protein-PII]-uridylyl-L-tyrosine + H2O = [protein-PII]-L-tyrosine + UMP + H(+). With respect to regulation, uridylyltransferase (UTase) activity is inhibited by glutamine, while glutamine activates uridylyl-removing (UR) activity. Functionally, modifies, by uridylylation and deuridylylation, the PII regulatory proteins (GlnB and homologs), in response to the nitrogen status of the cell that GlnD senses through the glutamine level. Under low glutamine levels, catalyzes the conversion of the PII proteins and UTP to PII-UMP and PPi, while under higher glutamine levels, GlnD hydrolyzes PII-UMP to PII and UMP (deuridylylation). Thus, controls uridylylation state and activity of the PII proteins, and plays an important role in the regulation of nitrogen fixation and metabolism. The chain is Bifunctional uridylyltransferase/uridylyl-removing enzyme from Sinorhizobium medicae (strain WSM419) (Ensifer medicae).